Reading from the N-terminus, the 427-residue chain is MNSSPDPLAALTATDPTIADLIRAEERRQSEKIRLIPSENYVSKAVLEATGTVLTNKYSEGYPNRRYYEGQQFIDQIETIAIERAKQLFGVDHANVQPYSGSPANLAIYLALLSPGDTVMGMALPMGGHLTHGWPVSATGIWFRSVQYGVRRDTGRIDFDEVREVARRERPKVIFAGGTAIPRIIDFAAFAEIAREVNAVLVADIAHISGLVAGGVHPSPVGHADIISTTTHKTLRGPRGAMLMSTEQYAKALDKAVFPGLQGGPHNHTTAAIAVALLEAMQPEFRDYARNIVANAAVLAEELLARGFDLVSGGTDNHLILVDLTSKGVAGKPVARALDRAGIELNYNTVPFDPRKPFDPSGIRLGTPAVTSRGMGPAEMRQIAAWIDEVTTAVAKGDEEALAAVEQRVAGEVRELTKNFPTPGLDR.

(6S)-5,6,7,8-tetrahydrofolate contacts are provided by residues Leu124 and 128–130 (GHL). An N6-(pyridoxal phosphate)lysine modification is found at Lys233.

It belongs to the SHMT family. Homodimer. Requires pyridoxal 5'-phosphate as cofactor.

The protein localises to the cytoplasm. The enzyme catalyses (6R)-5,10-methylene-5,6,7,8-tetrahydrofolate + glycine + H2O = (6S)-5,6,7,8-tetrahydrofolate + L-serine. It participates in one-carbon metabolism; tetrahydrofolate interconversion. It functions in the pathway amino-acid biosynthesis; glycine biosynthesis; glycine from L-serine: step 1/1. Its function is as follows. Catalyzes the reversible interconversion of serine and glycine with tetrahydrofolate (THF) serving as the one-carbon carrier. This reaction serves as the major source of one-carbon groups required for the biosynthesis of purines, thymidylate, methionine, and other important biomolecules. Also exhibits THF-independent aldolase activity toward beta-hydroxyamino acids, producing glycine and aldehydes, via a retro-aldol mechanism. The chain is Serine hydroxymethyltransferase from Acidothermus cellulolyticus (strain ATCC 43068 / DSM 8971 / 11B).